An 86-amino-acid polypeptide reads, in one-letter code: Small ribosomal subunit protein bS18 (86 aa).

This sequence belongs to the bacterial ribosomal protein bS18 family. As to quaternary structure, part of the 30S ribosomal subunit. Forms a tight heterodimer with protein bS6.

Binds as a heterodimer with protein bS6 to the central domain of the 16S rRNA, where it helps stabilize the platform of the 30S subunit. This is Small ribosomal subunit protein bS18 from Protochlamydia amoebophila (strain UWE25).